The chain runs to 384 residues: Probable inactive linolenate hydroperoxide lyase (384 aa).

Residue cysteine 346 participates in heme binding.

This sequence belongs to the cytochrome P450 family. Heme is required as a cofactor. Expressed in roots, leaves, flowers and siliques.

The polypeptide is Probable inactive linolenate hydroperoxide lyase (Arabidopsis thaliana (Mouse-ear cress)).